We begin with the raw amino-acid sequence, 74 residues long: Complement C5a anaphylatoxin (74 aa).

The tract at residues 15-44 (YAMLKKCCYDGAYRNDDETCEERAARIKIG) is involved in C5AR1 binding. 3 disulfides stabilise this stretch: Cys21/Cys47, Cys22/Cys54, and Cys34/Cys55. In terms of domain architecture, Anaphylatoxin-like spans 21-55 (CCYDGAYRNDDETCEERAARIKIGPKCVKAFKDCC). The tract at residues 72-74 (LGR) is required for 90% of C5a activity; although Arg-74 is not essential.

It is found in the secreted. Mediator of local inflammatory process released following cleavage by C5 convertase. Acts by binding to its receptor (C5AR1 or C5AR2), activating G protein-coupled receptor signaling and inducing a variety of responses including intracellular calcium release, contraction of smooth muscle, increased vascular permeability, and histamine release from mast cells and basophilic leukocytes. C5a is also a potent chemokine which stimulates the locomotion of polymorphonuclear leukocytes and directs their migration toward sites of inflammation. This chain is Complement C5a anaphylatoxin (C5), found in Sus scrofa (Pig).